A 306-amino-acid chain; its full sequence is Glutathione transport system permease protein GsiC (306 aa).

Over 1 to 8 (MLNYVLKR) the chain is Cytoplasmic. A helical transmembrane segment spans residues 9–29 (LLGLIPTLLIVAVLVFLFVHL). At 30-102 (LPGDPARLIA…SRFLPTLWLT (73 aa)) the chain is on the periplasmic side. The ABC transmembrane type-1 domain occupies 95-292 (FLPTLWLTIT…LEFILINLVV (198 aa)). Residues 103–123 (ITSMIWAVLFGMAIGIAAAVW) traverse the membrane as a helical segment. Residues 124–134 (RNRWPDRLGMT) lie on the Cytoplasmic side of the membrane. A helical membrane pass occupies residues 135–155 (LAVTGISFPAFALGMLLMQIF). The Periplasmic portion of the chain corresponds to 156–168 (SVDLGWLPTVGAD). Residues 169–189 (SWQHYILPSLTLGAAVASVMA) traverse the membrane as a helical segment. The Cytoplasmic segment spans residues 190-228 (RFTRSSFVDVLSEDYMRTARAKGVSETWVVLKHGLRNAM). A helical membrane pass occupies residues 229 to 249 (IPVVTMMGLQFGFLLGGSIVV). Over 250 to 278 (EKVFNWPGLGRLLVDSVDMRDYPVIQAEV) the chain is Periplasmic. Residues 279-299 (LLFSLEFILINLVVDVLYAAI) form a helical membrane-spanning segment. Residues 300–306 (NPAIRYK) are Cytoplasmic-facing.

This sequence belongs to the binding-protein-dependent transport system permease family. As to quaternary structure, the complex is composed of two ATP-binding proteins (GsiA), two transmembrane proteins (GsiC and GsiD) and a solute-binding protein (GsiB).

It is found in the cell inner membrane. In terms of biological role, part of the ABC transporter complex GsiABCD involved in glutathione import. Probably responsible for the translocation of the substrate across the membrane. The polypeptide is Glutathione transport system permease protein GsiC (Salmonella paratyphi A (strain ATCC 9150 / SARB42)).